Consider the following 391-residue polypeptide: Multidrug resistance protein MdtL (391 aa).

12 helical membrane passes run 4-24 (FLICSFALVLLYPAGIDMYLV), 42-62 (IAFSVYLAGMAAAMLFAGKVA), 69-89 (PVAIPGAALFIIASVFCSLAE), 93-113 (LFLAGRFLQGLGAGCCYVVAF), 134-154 (GITCIIPVLAPVLGHLIMLNF), 158-178 (SLFWTMAIMGVAVLMLSLFIL), 203-222 (FFLSRVVITTLSVSVILTFV), 245-265 (ALTAGVSMTVSFSTPFALGIF), 269-289 (TLMITSQVLFLAAGITLAVSP), 293-313 (VSLFGITLICAGFSVGFGVAM), 331-351 (LGIAQVCGSSLWIWLAAVVGI), and 356-376 (MLIGILIACSIVSLLLIMFVA).

It belongs to the major facilitator superfamily. DHA1 family. MdtL (TC 2.A.1.2.22) subfamily.

The protein localises to the cell inner membrane. Functionally, confers resistance to chloramphenicol. The chain is Multidrug resistance protein MdtL from Escherichia coli O81 (strain ED1a).